The sequence spans 146 residues: Hemoglobin subunit beta (146 aa).

Residues 2–146 (FLTAEEKGLV…VASALAHRYH (145 aa)) enclose the Globin domain. A Phosphoserine modification is found at serine 44. Residue lysine 59 is modified to N6-acetyllysine. Histidine 63 lines the heme b pocket. Residue lysine 82 is modified to N6-acetyllysine. Histidine 92 is a binding site for heme b. Residue cysteine 93 is modified to S-nitrosocysteine.

The protein belongs to the globin family. Heterotetramer of two alpha chains and two beta chains. Red blood cells.

Involved in oxygen transport from the lung to the various peripheral tissues. This is Hemoglobin subunit beta (HBB) from Paguma larvata (Masked palm civet).